Reading from the N-terminus, the 260-residue chain is Adenosylcobinamide-GDP ribazoletransferase (260 aa).

Transmembrane regions (helical) follow at residues Ala40–Leu60, Thr64–Leu84, Tyr117–Ile137, Pro142–Trp162, His188–Leu208, and Pro210–Arg230.

The protein belongs to the CobS family. Requires Mg(2+) as cofactor.

The protein resides in the cell inner membrane. The catalysed reaction is alpha-ribazole + adenosylcob(III)inamide-GDP = adenosylcob(III)alamin + GMP + H(+). The enzyme catalyses alpha-ribazole 5'-phosphate + adenosylcob(III)inamide-GDP = adenosylcob(III)alamin 5'-phosphate + GMP + H(+). It functions in the pathway cofactor biosynthesis; adenosylcobalamin biosynthesis; adenosylcobalamin from cob(II)yrinate a,c-diamide: step 7/7. Joins adenosylcobinamide-GDP and alpha-ribazole to generate adenosylcobalamin (Ado-cobalamin). Also synthesizes adenosylcobalamin 5'-phosphate from adenosylcobinamide-GDP and alpha-ribazole 5'-phosphate. This Rhizobium etli (strain ATCC 51251 / DSM 11541 / JCM 21823 / NBRC 15573 / CFN 42) protein is Adenosylcobinamide-GDP ribazoletransferase.